A 132-amino-acid polypeptide reads, in one-letter code: Pro-MCH 2 (132 aa).

An N-terminal signal peptide occupies residues 1-24 (MRDSVLSVIFALALFLECYTPSMA). Cysteines 120 and 129 form a disulfide.

This sequence belongs to the melanin-concentrating hormone family. As to expression, pituitary gland. Produced in neurons of lateral basal hypothalamus which project both to the brain and to the neural lobe of the pituitary gland from where MCH is released.

Plays a role in skin pigmentation by antagonizing the action of melanotropin alpha. Induces melanin concentration within the melanophores. May participate in the control of the hypothalamo-pituitary adrenal gland axis by inhibiting the release of ACTH. The chain is Pro-MCH 2 (mch2) from Oncorhynchus keta (Chum salmon).